A 968-amino-acid polypeptide reads, in one-letter code: RNA polymerase-associated protein RapA (968 aa).

The 171-residue stretch at 164–334 (DVGRRHAPRV…FARLRLLDPS (171 aa)) folds into the Helicase ATP-binding domain. Residue 177-184 (DEVGLGKT) participates in ATP binding. The DEAH box signature appears at 280–283 (DEAH). Residues 490-644 (RVEWLMGHLT…TCPTGRAIYD (155 aa)) form the Helicase C-terminal domain.

This sequence belongs to the SNF2/RAD54 helicase family. RapA subfamily. As to quaternary structure, interacts with the RNAP. Has a higher affinity for the core RNAP than for the holoenzyme. Its ATPase activity is stimulated by binding to RNAP.

Functionally, transcription regulator that activates transcription by stimulating RNA polymerase (RNAP) recycling in case of stress conditions such as supercoiled DNA or high salt concentrations. Probably acts by releasing the RNAP, when it is trapped or immobilized on tightly supercoiled DNA. Does not activate transcription on linear DNA. Probably not involved in DNA repair. In Citrobacter koseri (strain ATCC BAA-895 / CDC 4225-83 / SGSC4696), this protein is RNA polymerase-associated protein RapA.